Here is a 98-residue protein sequence, read N- to C-terminus: uncharacterized protein (98 aa).

It belongs to the HHV-5 UL19 protein family.

This is an uncharacterized protein from Human cytomegalovirus (strain AD169) (HHV-5).